The primary structure comprises 213 residues: Kynurenine formamidase (213 aa).

Trp-18 is a substrate binding site. His-48, His-52, and Asp-54 together coordinate Zn(2+). His-58 acts as the Proton donor/acceptor in catalysis. Zn(2+)-binding residues include His-160 and Glu-172.

The protein belongs to the Cyclase 1 superfamily. KynB family. Homodimer. Zn(2+) serves as cofactor.

The enzyme catalyses N-formyl-L-kynurenine + H2O = L-kynurenine + formate + H(+). The protein operates within amino-acid degradation; L-tryptophan degradation via kynurenine pathway; L-kynurenine from L-tryptophan: step 2/2. Catalyzes the hydrolysis of N-formyl-L-kynurenine to L-kynurenine, the second step in the kynurenine pathway of tryptophan degradation. This chain is Kynurenine formamidase, found in Burkholderia lata (strain ATCC 17760 / DSM 23089 / LMG 22485 / NCIMB 9086 / R18194 / 383).